Reading from the N-terminus, the 24-residue chain is Cytochrome c3-2 (24 aa).

The interval 1–24 (GNAPAADMVLKAPGDAKMTKTAVP) is disordered.

Post-translationally, binds 4 heme groups per subunit.

The protein localises to the periplasm. Participates in sulfate respiration coupled with phosphorylation by transferring electrons from the enzyme dehydrogenase to ferredoxin. This is Cytochrome c3-2 from Nitratidesulfovibrio vulgaris (Desulfovibrio vulgaris).